The chain runs to 386 residues: Protein-glutamate methylesterase/protein-glutamine glutaminase (386 aa).

The 118-residue stretch at 4 to 121 (KVLVVDDSAF…ARNRDEAVKT (118 aa)) folds into the Response regulatory domain. Asp55 is subject to 4-aspartylphosphate. Residues 133–161 (PVSRTSARASTPPPVAKQPERSSEPTTAL) form a disordered region. Positions 190–384 (INRAYQLLAI…KAIMKEVGYS (195 aa)) constitute a CheB-type methylesterase domain. Residues Ser202, His229, and Asp326 contribute to the active site.

The protein belongs to the CheB family. Phosphorylated by CheA. Phosphorylation of the N-terminal regulatory domain activates the methylesterase activity.

It localises to the cytoplasm. The catalysed reaction is [protein]-L-glutamate 5-O-methyl ester + H2O = L-glutamyl-[protein] + methanol + H(+). It catalyses the reaction L-glutaminyl-[protein] + H2O = L-glutamyl-[protein] + NH4(+). Its function is as follows. Involved in chemotaxis. Part of a chemotaxis signal transduction system that modulates chemotaxis in response to various stimuli. Catalyzes the demethylation of specific methylglutamate residues introduced into the chemoreceptors (methyl-accepting chemotaxis proteins or MCP) by CheR. Also mediates the irreversible deamidation of specific glutamine residues to glutamic acid. This chain is Protein-glutamate methylesterase/protein-glutamine glutaminase, found in Idiomarina loihiensis (strain ATCC BAA-735 / DSM 15497 / L2-TR).